An 88-amino-acid chain; its full sequence is MAQKTFTVTADSGIHARPATTLVQAASKFDSDINLEFNGKTVNLKSIMGVMSLGIQKGATITISAEGSDEADALAALEDTMSKEGLGE.

Positions 1–88 constitute an HPr domain; sequence MAQKTFTVTA…DTMSKEGLGE (88 aa). Ser12 carries the phosphoserine modification. The active-site Pros-phosphohistidine intermediate is the His15. At Ser46 the chain carries Phosphoserine; by HPrK/P.

The protein belongs to the HPr family.

It is found in the cytoplasm. Phosphorylation on Ser-46 inhibits the phosphoryl transfer from enzyme I to HPr. In terms of biological role, general (non sugar-specific) component of the phosphoenolpyruvate-dependent sugar phosphotransferase system (sugar PTS). This major carbohydrate active-transport system catalyzes the phosphorylation of incoming sugar substrates concomitantly with their translocation across the cell membrane. The phosphoryl group from phosphoenolpyruvate (PEP) is transferred to the phosphoryl carrier protein HPr by enzyme I. Phospho-HPr then transfers it to the PTS EIIA domain. Functionally, P-Ser-HPr interacts with the catabolite control protein A (CcpA), forming a complex that binds to DNA at the catabolite response elements cre, operator sites preceding a large number of catabolite-regulated genes. Thus, P-Ser-HPr is a corepressor in carbon catabolite repression (CCR), a mechanism that allows bacteria to coordinate and optimize the utilization of available carbon sources. P-Ser-HPr also plays a role in inducer exclusion, in which it probably interacts with several non-PTS permeases and inhibits their transport activity. The sequence is that of Phosphocarrier protein HPr (ptsH) from Priestia megaterium (Bacillus megaterium).